The primary structure comprises 358 residues: Phosphoserine aminotransferase (358 aa).

Residue arginine 41 coordinates L-glutamate. Pyridoxal 5'-phosphate is bound by residues 75-76, tryptophan 101, threonine 150, aspartate 170, and glutamine 193; that span reads AR. Lysine 194 carries the post-translational modification N6-(pyridoxal phosphate)lysine. 235 to 236 is a pyridoxal 5'-phosphate binding site; that stretch reads NT.

The protein belongs to the class-V pyridoxal-phosphate-dependent aminotransferase family. SerC subfamily. Homodimer. Requires pyridoxal 5'-phosphate as cofactor.

The protein resides in the cytoplasm. The catalysed reaction is O-phospho-L-serine + 2-oxoglutarate = 3-phosphooxypyruvate + L-glutamate. It carries out the reaction 4-(phosphooxy)-L-threonine + 2-oxoglutarate = (R)-3-hydroxy-2-oxo-4-phosphooxybutanoate + L-glutamate. It participates in amino-acid biosynthesis; L-serine biosynthesis; L-serine from 3-phospho-D-glycerate: step 2/3. It functions in the pathway cofactor biosynthesis; pyridoxine 5'-phosphate biosynthesis; pyridoxine 5'-phosphate from D-erythrose 4-phosphate: step 3/5. Catalyzes the reversible conversion of 3-phosphohydroxypyruvate to phosphoserine and of 3-hydroxy-2-oxo-4-phosphonooxybutanoate to phosphohydroxythreonine. In Histophilus somni (strain 129Pt) (Haemophilus somnus), this protein is Phosphoserine aminotransferase.